The chain runs to 213 residues: Large ribosomal subunit protein uL1 (213 aa).

Belongs to the universal ribosomal protein uL1 family.

This Chlamydomonas reinhardtii (Chlamydomonas smithii) protein is Large ribosomal subunit protein uL1 (RPL10A).